The sequence spans 380 residues: Cytochrome b (380 aa).

Helical transmembrane passes span 34 to 54 (FGSL…LLAM), 78 to 99 (WLLH…FLHI), 114 to 134 (WNTG…GYVL), and 179 to 199 (FFAL…IHLM). Heme b contacts are provided by His84 and His98. The heme b site is built by His183 and His197. Position 202 (His202) interacts with a ubiquinone. 4 helical membrane-spanning segments follow: residues 227–247 (IKDI…TLFS), 289–309 (LGGV…PFLH), 321–341 (LSQT…WVGS), and 348–368 (FIII…ILFP).

This sequence belongs to the cytochrome b family. The cytochrome bc1 complex contains 11 subunits: 3 respiratory subunits (MT-CYB, CYC1 and UQCRFS1), 2 core proteins (UQCRC1 and UQCRC2) and 6 low-molecular weight proteins (UQCRH/QCR6, UQCRB/QCR7, UQCRQ/QCR8, UQCR10/QCR9, UQCR11/QCR10 and a cleavage product of UQCRFS1). This cytochrome bc1 complex then forms a dimer. Heme b serves as cofactor.

The protein resides in the mitochondrion inner membrane. Component of the ubiquinol-cytochrome c reductase complex (complex III or cytochrome b-c1 complex) that is part of the mitochondrial respiratory chain. The b-c1 complex mediates electron transfer from ubiquinol to cytochrome c. Contributes to the generation of a proton gradient across the mitochondrial membrane that is then used for ATP synthesis. The polypeptide is Cytochrome b (MT-CYB) (Meleagris gallopavo (Wild turkey)).